The chain runs to 432 residues: Myb family transcription factor EFM (432 aa).

The stretch at 36–81 (LEDLLSRLEQERLKIDAFKRELPLCMQLLNNAVEVYKQQLEAYRAN) forms a coiled coil. Composition is skewed to polar residues over residues 123-139 (SQSETKPKNIDSTTDQS) and 187-197 (SPTNEHTNGQD). Residues 123-237 (SQSETKPKNI…SQSNRKARRC (115 aa)) are disordered. A compositionally biased stretch (low complexity) spans 201–231 (ESMINNDNNYNNNNNNNSNSNGVSSTTSQSN). The HTH myb-type domain maps to 230–290 (SNRKARRCWS…HLQKYRLHTR (61 aa)). A DNA-binding region (H-T-H motif) is located at residues 261–286 (PKQIRELMKVDGLTNDEVKSHLQKYR). Residues 354–412 (FYTTPPPPQPLHHHHFQTFNGSSGGTASTDSTHHQVTDSPTVEGKSPESGGGERKGLAA) form a disordered region.

In terms of assembly, interacts with JMJ30, but not with SVP, FLC or CO. Specifically expressed in vascular tissues of cotyledons, rosette leaves and cauline leaves. Not detected in the vegetative shoot apical meristem.

It localises to the nucleus. In terms of biological role, transcription factor acting as a flowering repressor, directly repressing FT expression in a dosage-dependent manner in the leaf vasculature. This Arabidopsis thaliana (Mouse-ear cress) protein is Myb family transcription factor EFM.